The primary structure comprises 23 residues: Phallacidin proprotein 1 (23 aa).

P1 is a propeptide. A cross-link (cyclopeptide (Ala-Pro)) is located at residues 2-8; sequence AWLVDCP. A cross-link (2'-cysteinyl-6'-hydroxytryptophan sulfoxide (Trp-Cys)) is located at residues 3–7; sequence WLVDC. Positions 9-23 are excised as a propeptide; sequence CVGDDINRLLTRGEK.

It belongs to the MSDIN fungal toxin family. In terms of processing, processed by the macrocyclase-peptidase enzyme POPB to yield a toxic cyclic heptapeptide. POPB first removes 10 residues from the N-terminus. Conformational trapping of the remaining peptide forces the enzyme to release this intermediate rather than proceed to macrocyclization. The enzyme rebinds the remaining peptide in a different conformation and catalyzes macrocyclization of the N-terminal 7 residues.

Major toxin that belongs to the bicyclic heptapeptides called phallotoxins. Although structurally related to amatoxins, phallotoxins have a different mode of action, which is the stabilization of F-actin. Phallotoxins are poisonous when administered parenterally, but not orally because of poor absorption. The protein is Phallacidin proprotein 1 of Amanita phalloides (Death cap).